Reading from the N-terminus, the 366-residue chain is Ubiquitin carboxyl-terminal hydrolase 46 (366 aa).

Residues 35–365 form the USP domain; that stretch reads FGLVNFGNTC…SGYILFYQSR (331 aa). C44 functions as the Nucleophile in the catalytic mechanism. Zn(2+)-binding residues include C182, C185, C229, and C232. Catalysis depends on H313, which acts as the Proton acceptor.

This sequence belongs to the peptidase C19 family. USP12/USP46 subfamily. In terms of assembly, interacts with WDR48. Interacts with WDR20. Interacts with DMWD. Component of the USP46/WDR20/WDR48 deubiquitinating complex. In terms of tissue distribution, detected in lung and spleen, and at lower levels in brain, kidney, testis and liver.

Its subcellular location is the cytoplasm. It catalyses the reaction Thiol-dependent hydrolysis of ester, thioester, amide, peptide and isopeptide bonds formed by the C-terminal Gly of ubiquitin (a 76-residue protein attached to proteins as an intracellular targeting signal).. In terms of biological role, deubiquitinating enzyme that plays a role in behavior, possibly by regulating GABA action. May act by mediating the deubiquitination of GAD1/GAD67. Has almost no deubiquitinating activity by itself and requires the interaction with WDR48 to have a high activity. Not involved in deubiquitination of monoubiquitinated FANCD2. The sequence is that of Ubiquitin carboxyl-terminal hydrolase 46 from Rattus norvegicus (Rat).